The following is a 258-amino-acid chain: Small ribosomal subunit protein uS2 (258 aa).

This sequence belongs to the universal ribosomal protein uS2 family.

The chain is Small ribosomal subunit protein uS2 from Leuconostoc citreum (strain KM20).